A 690-amino-acid chain; its full sequence is Heterogeneous nuclear ribonucleoprotein M (690 aa).

Residues 1-13 (MAAGVEAAAEVAA) are compositionally biased toward low complexity. Residues 1-63 (MAAGVEAAAE…KRGGNRFEPY (63 aa)) form a disordered region. A2 is subject to N-acetylalanine. Residue K17 forms a Glycyl lysine isopeptide (Lys-Gly) (interchain with G-Cter in SUMO2) linkage. S29 carries the post-translational modification Phosphoserine. Residues K37, K68, and K82 each participate in a glycyl lysine isopeptide (Lys-Gly) (interchain with G-Cter in SUMO2) cross-link. Residues 37-49 (KGEERPTQNEKRK) show a composition bias toward basic and acidic residues. RRM domains lie at 70-148 (YRAF…EDPD) and 164-241 (STVF…MDER). A Phosphoserine modification is found at S85. Glycyl lysine isopeptide (Lys-Gly) (interchain with G-Cter in SUMO2) cross-links involve residues K87 and K126. K133 carries the post-translational modification N6-acetyllysine; alternate. A Glycyl lysine isopeptide (Lys-Gly) (interchain with G-Cter in SUMO2); alternate cross-link involves residue K133. Residues K142 and K144 each participate in a glycyl lysine isopeptide (Lys-Gly) (interchain with G-Cter in SUMO2) cross-link. S164 carries the phosphoserine modification. K181 is covalently cross-linked (Glycyl lysine isopeptide (Lys-Gly) (interchain with G-Cter in SUMO2)). K237 carries the post-translational modification N6-acetyllysine; alternate. A Glycyl lysine isopeptide (Lys-Gly) (interchain with G-Cter in SUMO2); alternate cross-link involves residue K237. Glycyl lysine isopeptide (Lys-Gly) (interchain with G-Cter in SUMO2) cross-links involve residues K245 and K305. Phosphoserine is present on residues S325 and S337. Residues K341 and K348 each participate in a glycyl lysine isopeptide (Lys-Gly) (interchain with G-Cter in SUMO2) cross-link. S357 is subject to Phosphoserine. Tandem repeats lie at residues 360–365 (GIERMG), 367–372 (GIDRIS), 375–380 (GMERMG), and 386–391 (GMDRVG). Residues 360 to 568 (GIERMGPGID…ALGAGIERMG (209 aa)) form a 27 X 6 AA repeats of [GEVSTPAN]-[ILMV]-[DE]-[RH]-[MLVI]-[GAV] region. At S392 the chain carries Phosphoserine. A run of 3 repeats spans residues 393–398 (EIERMG), 400–405 (VMDRMG), and 406–411 (SVERMG). S412 carries the phosphoserine modification. A run of 4 repeats spans residues 413–418 (GIERMG), 421–426 (GLDHMA), 428–433 (SIERMG), and 435–440 (TMERIG). The residue at position 428 (S428) is a Phosphoserine. The residue at position 441 (S441) is a Phosphoserine. Repeat copies occupy residues 442 to 447 (GVERMG), 453 to 458 (GLERMA), 460 to 465 (PIDRVG), 467 to 472 (TIERMG), 474 to 479 (GVERMG), 481 to 486 (AIERMG), 488 to 493 (SMDRMV), 500 to 505 (GLERMG), 507 to 512 (VMDRMA), 514 to 519 (GLERMG), 522 to 527 (NLERMG), 528 to 532 (LERMG), 535 to 540 (SLERMG), 541 to 545 (LERMG), 548 to 553 (SLERMG), and 563 to 568 (GIERMG). R456 is subject to Omega-N-methylarginine. S488 carries the post-translational modification Phosphoserine. A Phosphoserine modification is found at S535. S548 is subject to Phosphoserine. Residues S578, S593, and S597 each carry the phosphoserine modification. A Glycyl lysine isopeptide (Lys-Gly) (interchain with G-Cter in SUMO2) cross-link involves residue K611. The region spanning 613–689 (CQIFVRNLPF…REIDVRIDRN (77 aa)) is the RRM 3 domain. T625 is subject to Phosphothreonine. K627 is covalently cross-linked (Glycyl lysine isopeptide (Lys-Gly) (interchain with G-Cter in SUMO2)). N6-acetyllysine is present on K632. Residues K645 and K652 each participate in a glycyl lysine isopeptide (Lys-Gly) (interchain with G-Cter in SUMO2) cross-link. K658 is modified (N6-acetyllysine; alternate). Residue K658 forms a Glycyl lysine isopeptide (Lys-Gly) (interchain with G-Cter in SUMO2); alternate linkage. K658 participates in a covalent cross-link: Glycyl lysine isopeptide (Lys-Gly) (interchain with G-Cter in SUMO1); alternate. At S661 the chain carries Phosphoserine. A Glycyl lysine isopeptide (Lys-Gly) (interchain with G-Cter in SUMO2) cross-link involves residue K676.

As to quaternary structure, identified in the spliceosome C complex. Interacts with PPIA/CYPA. Sumoylated. As to expression, expressed in all tissues tested, including liver, heart, lung, skeletal muscle, kidney, stomach, large intestine, small intestine, pancreas, spleen, peritoneal macrophage and thyroid.

It is found in the nucleus matrix. In terms of biological role, pre-mRNA binding protein, binds avidly to poly(G) and poly(U) RNA homopolymers. Involved in splicing. Acts as a receptor for carcinoembryonic antigen in Kupffer cells, may initiate a series of signaling events leading to tyrosine phosphorylation of proteins and induction of IL-1 alpha, IL-6, IL-10 and tumor necrosis factor alpha cytokines. The chain is Heterogeneous nuclear ribonucleoprotein M (Hnrnpm) from Rattus norvegicus (Rat).